The sequence spans 276 residues: MSARWTTAVLDPQMTGGLAVARSPEGFLVDANGALFPRDWLKRQDLDVLCEHGIGHFDGQPVFLLELRSATDVPGCSWRGLRAFMLEGDFDTYKVLGYAAQIGTWAREHRFCGSCGQAMTQIRWERAMYCQPCDLRSYPRISPSMIVLVTRGDEILLARSPRFVTGVYSTLAGFAEPGESAEDCLVREVREEVAVEVRNIQYVGSQCWPFPHSMMLGFHAEYAGGEIVMQPDEIEDAKWFSVHDLPPLPAGRSIARYLIDLYVARRLGCDIPAFPS.

Residue Arg82 coordinates substrate. 2 residues coordinate Zn(2+): Cys112 and Cys115. Glu125 lines the substrate pocket. Cys130 and Cys133 together coordinate Zn(2+). Tyr138 lines the substrate pocket. Residues 139–262 (PRISPSMIVL…SIARYLIDLY (124 aa)) enclose the Nudix hydrolase domain. A divalent metal cation contacts are provided by Ala172, Glu188, and Glu192. The Nudix box motif lies at 173–194 (GFAEPGESAEDCLVREVREEVA). A substrate-binding site is contributed by 206 to 213 (QCWPFPHS). Glu233 serves as a coordination point for a divalent metal cation. Residue Ala255 participates in substrate binding.

The protein belongs to the Nudix hydrolase family. NudC subfamily. Homodimer. Mg(2+) is required as a cofactor. Requires Mn(2+) as cofactor. It depends on Zn(2+) as a cofactor.

The enzyme catalyses a 5'-end NAD(+)-phospho-ribonucleoside in mRNA + H2O = a 5'-end phospho-adenosine-phospho-ribonucleoside in mRNA + beta-nicotinamide D-ribonucleotide + 2 H(+). It catalyses the reaction NAD(+) + H2O = beta-nicotinamide D-ribonucleotide + AMP + 2 H(+). It carries out the reaction NADH + H2O = reduced beta-nicotinamide D-ribonucleotide + AMP + 2 H(+). Functionally, mRNA decapping enzyme that specifically removes the nicotinamide adenine dinucleotide (NAD) cap from a subset of mRNAs by hydrolyzing the diphosphate linkage to produce nicotinamide mononucleotide (NMN) and 5' monophosphate mRNA. The NAD-cap is present at the 5'-end of some mRNAs and stabilizes RNA against 5'-processing. Has preference for mRNAs with a 5'-end purine. Catalyzes the hydrolysis of a broad range of dinucleotide pyrophosphates. The polypeptide is NAD-capped RNA hydrolase NudC (Pseudomonas putida (strain ATCC 700007 / DSM 6899 / JCM 31910 / BCRC 17059 / LMG 24140 / F1)).